The sequence spans 247 residues: Adenylyl-sulfate kinase (247 aa).

The disordered stretch occupies residues 1–24 (MSQSNSDDSASSSTQQAGDGQDDV). 55-62 (GLSGCGKS) provides a ligand contact to ATP. S146 acts as the Phosphoserine intermediate in catalysis.

This sequence belongs to the APS kinase family.

It catalyses the reaction adenosine 5'-phosphosulfate + ATP = 3'-phosphoadenylyl sulfate + ADP + H(+). Its pathway is sulfur metabolism; hydrogen sulfide biosynthesis; sulfite from sulfate: step 2/3. Catalyzes the synthesis of activated sulfate. This Rhodopirellula baltica (strain DSM 10527 / NCIMB 13988 / SH1) protein is Adenylyl-sulfate kinase.